Here is a 204-residue protein sequence, read N- to C-terminus: Thymidylate kinase (204 aa).

Residue 12 to 19 coordinates ATP; the sequence is GVDGAGKS.

This sequence belongs to the thymidylate kinase family.

It catalyses the reaction dTMP + ATP = dTDP + ADP. In terms of biological role, phosphorylation of dTMP to form dTDP in both de novo and salvage pathways of dTTP synthesis. The chain is Thymidylate kinase from Thiobacillus denitrificans (strain ATCC 25259 / T1).